The sequence spans 236 residues: 2,3,4,5-tetrahydropyridine-2,6-dicarboxylate N-acetyltransferase (236 aa).

It belongs to the transferase hexapeptide repeat family. DapH subfamily.

The enzyme catalyses (S)-2,3,4,5-tetrahydrodipicolinate + acetyl-CoA + H2O = L-2-acetamido-6-oxoheptanedioate + CoA. It functions in the pathway amino-acid biosynthesis; L-lysine biosynthesis via DAP pathway; LL-2,6-diaminopimelate from (S)-tetrahydrodipicolinate (acetylase route): step 1/3. In terms of biological role, catalyzes the transfer of an acetyl group from acetyl-CoA to tetrahydrodipicolinate. The protein is 2,3,4,5-tetrahydropyridine-2,6-dicarboxylate N-acetyltransferase of Pediococcus pentosaceus (strain ATCC 25745 / CCUG 21536 / LMG 10740 / 183-1w).